Reading from the N-terminus, the 79-residue chain is Protein B6 (79 aa).

In Human herpesvirus 6B (strain Z29) (HHV-6 variant B), this protein is Protein B6 (B6).